A 463-amino-acid chain; its full sequence is tRNA (guanine(10)-N(2))-methyltransferase TRMT11 (463 aa).

At Ala2 the chain carries N-acetylalanine.

This sequence belongs to the class I-like SAM-binding methyltransferase superfamily. TRM11 methyltransferase family. In terms of assembly, part of the heterodimeric TRMT11-TRM112 methyltransferase complex; this complex forms an active tRNA methyltransferase, where TRMT112 acts as an activator of the catalytic subunit TRMT11.

It is found in the cytoplasm. The catalysed reaction is guanosine(10) in tRNA + S-adenosyl-L-methionine = N(2)-methylguanosine(10) in tRNA + S-adenosyl-L-homocysteine + H(+). Catalytic subunit of the TRMT11-TRM112 methyltransferase complex, that specifically mediates the S-adenosyl-L-methionine-dependent N(2)-methylation of guanosine nucleotide at position 10 (m2G10) in tRNAs. This is one of the major tRNA (guanine-N(2))-methyltransferases. The sequence is that of tRNA (guanine(10)-N(2))-methyltransferase TRMT11 from Homo sapiens (Human).